Consider the following 213-residue polypeptide: Proteasome subunit beta (213 aa).

Residues 1–11 (MPEQYQESMTG) constitute a propeptide, removed in mature form; by autocatalysis. Threonine 12 functions as the Nucleophile in the catalytic mechanism.

This sequence belongs to the peptidase T1B family. In terms of assembly, the 20S proteasome core is composed of 14 alpha and 14 beta subunits that assemble into four stacked heptameric rings, resulting in a barrel-shaped structure. The two inner rings, each composed of seven catalytic beta subunits, are sandwiched by two outer rings, each composed of seven alpha subunits. The catalytic chamber with the active sites is on the inside of the barrel. Has a gated structure, the ends of the cylinder being occluded by the N-termini of the alpha-subunits. Is capped at one or both ends by the proteasome regulatory ATPase, PAN.

The protein resides in the cytoplasm. It catalyses the reaction Cleavage of peptide bonds with very broad specificity.. With respect to regulation, the formation of the proteasomal ATPase PAN-20S proteasome complex, via the docking of the C-termini of PAN into the intersubunit pockets in the alpha-rings, triggers opening of the gate for substrate entry. Interconversion between the open-gate and close-gate conformations leads to a dynamic regulation of the 20S proteasome proteolysis activity. In terms of biological role, component of the proteasome core, a large protease complex with broad specificity involved in protein degradation. This is Proteasome subunit beta from Methanoregula boonei (strain DSM 21154 / JCM 14090 / 6A8).